Reading from the N-terminus, the 255-residue chain is Large ribosomal subunit protein uL2 (255 aa).

The interval 201-229 (YAHPHGGGSHQQGGTPVKKNAPPGQKVGF) is disordered.

This sequence belongs to the universal ribosomal protein uL2 family. As to quaternary structure, part of the 50S ribosomal subunit. Forms a bridge to the 30S subunit in the 70S ribosome.

One of the primary rRNA binding proteins. Required for association of the 30S and 50S subunits to form the 70S ribosome, for tRNA binding and peptide bond formation. It has been suggested to have peptidyltransferase activity; this is somewhat controversial. Makes several contacts with the 16S rRNA in the 70S ribosome. This chain is Large ribosomal subunit protein uL2, found in Caldivirga maquilingensis (strain ATCC 700844 / DSM 13496 / JCM 10307 / IC-167).